A 158-amino-acid chain; its full sequence is Endoribonuclease YbeY (158 aa).

The Zn(2+) site is built by H118, H122, and H128.

This sequence belongs to the endoribonuclease YbeY family. The cofactor is Zn(2+).

The protein resides in the cytoplasm. In terms of biological role, single strand-specific metallo-endoribonuclease involved in late-stage 70S ribosome quality control and in maturation of the 3' terminus of the 16S rRNA. In Alteromonas mediterranea (strain DSM 17117 / CIP 110805 / LMG 28347 / Deep ecotype), this protein is Endoribonuclease YbeY.